We begin with the raw amino-acid sequence, 389 residues long: 5-hydroxytryptamine receptor 1B (389 aa).

Residues 1–27 form a disordered region; sequence MEDAGTPCAPPPPAGSQTGAPPANLSS. The Extracellular segment spans residues 1 to 45; the sequence is MEDAGTPCAPPPPAGSQTGAPPANLSSAPHNCSAEGYIYQDSIAL. Positions 15-27 are enriched in polar residues; the sequence is GSQTGAPPANLSS. Residues N24 and N31 are each glycosylated (N-linked (GlcNAc...) asparagine). Residues 46–71 traverse the membrane as a helical segment; the sequence is PWKVLLAILLALLTLATTLSNAFVIA. Residues 72–85 are Cytoplasmic-facing; it reads TVYRTRKLHTPANY. The chain crosses the membrane as a helical span at residues 86 to 110; sequence LIASLAVTDLLVSILVMPISTMYAV. Over 111–118 the chain is Extracellular; that stretch reads TGRWTLGQ. Residues 119–144 traverse the membrane as a helical segment; that stretch reads VVCDLWLSSDITCCTASILHLCVIAL. C121 and C198 are disulfide-bonded. Residues D128 and T133 each coordinate ergotamine. The DRY motif; important for ligand-induced conformation changes and signaling signature appears at 145–147; the sequence is DRY. Residues 145 to 164 are Cytoplasmic-facing; the sequence is DRYWAITDAVEYSAKRTPKR. The helical transmembrane segment at 165-183 threads the bilayer; it reads AAVMIALVWVFSISISLPP. The Extracellular portion of the chain corresponds to 184–204; sequence FFWRQAKAEEEVSDCVVNTDH. Residue V200 coordinates ergotamine. Residues 205 to 228 form a helical membrane-spanning segment; sequence ILYTVYSTVGAFYFPTLLLIALYG. Topologically, residues 229–314 are cytoplasmic; sequence RIYVEARSRI…AARERKATKT (86 aa). Over residues 258–271 the composition is skewed to polar residues; the sequence is DSPGSTSSVTSVNS. Residues 258 to 281 form a disordered region; sequence DSPGSTSSVTSVNSRAPDVPSESG. A helical membrane pass occupies residues 315–336; the sequence is LGIILGAFIVCWLPFFIISLVM. The Extracellular portion of the chain corresponds to 337-346; that stretch reads PICKDACWFH. Residues 347–369 form a helical membrane-spanning segment; it reads LAIFDFFTWLGYLNSLINPIIYT. The short motif at 364 to 368 is the NPxxY motif; important for ligand-induced conformation changes and signaling element; sequence NPIIY. The Cytoplasmic segment spans residues 370–389; it reads MSNEDFKQAFHKLIRFKCAS. The S-palmitoyl cysteine moiety is linked to residue C387.

This sequence belongs to the G-protein coupled receptor 1 family. Homodimer. Heterodimer with HTR1D. Phosphorylated. Desensitization of the receptor may be mediated by its phosphorylation. Post-translationally, palmitoylated.

Its subcellular location is the cell membrane. Functionally, G-protein coupled receptor for 5-hydroxytryptamine (serotonin). Also functions as a receptor for ergot alkaloid derivatives, various anxiolytic and antidepressant drugs and other psychoactive substances, such as lysergic acid diethylamide (LSD). Ligand binding causes a conformation change that triggers signaling via guanine nucleotide-binding proteins (G proteins) and modulates the activity of downstream effectors, such as adenylate cyclase. HTR1B is coupled to G(i)/G(o) G alpha proteins and mediates inhibitory neurotransmission by inhibiting adenylate cyclase activity. Arrestin family members inhibit signaling via G proteins and mediate activation of alternative signaling pathways. Regulates the release of 5-hydroxytryptamine, dopamine and acetylcholine in the brain, and thereby affects neural activity, nociceptive processing, pain perception, mood and behavior. Besides, plays a role in vasoconstriction of cerebral arteries. This chain is 5-hydroxytryptamine receptor 1B (HTR1B), found in Vulpes vulpes (Red fox).